Reading from the N-terminus, the 782-residue chain is LPS-assembly protein LptD (782 aa).

The signal sequence occupies residues 1–23 (MNKKHTLISLAILTALYSQQSLA).

Belongs to the LptD family. As to quaternary structure, component of the lipopolysaccharide transport and assembly complex. Interacts with LptE and LptA.

It is found in the cell outer membrane. Functionally, together with LptE, is involved in the assembly of lipopolysaccharide (LPS) at the surface of the outer membrane. The sequence is that of LPS-assembly protein LptD from Haemophilus influenzae (strain ATCC 51907 / DSM 11121 / KW20 / Rd).